Consider the following 399-residue polypeptide: Small ribosomal subunit protein uS3m (399 aa).

It belongs to the universal ribosomal protein uS3 family.

The protein localises to the mitochondrion. Functionally, essential for mitochondrial protein synthesis and required for the maturation of small ribosomal subunits. In Penicillium urticae, this protein is Small ribosomal subunit protein uS3m.